A 476-amino-acid polypeptide reads, in one-letter code: Bifunctional protein HldE (476 aa).

The interval 1 to 319 (MKVSLPAFEK…EALALHHGES (319 aa)) is ribokinase. 195–198 (NMSE) contacts ATP. Asp-264 is an active-site residue. The tract at residues 345-476 (MTNGCFDILH…AIIQNIMANQ (132 aa)) is cytidylyltransferase.

This sequence in the N-terminal section; belongs to the carbohydrate kinase PfkB family. It in the C-terminal section; belongs to the cytidylyltransferase family. As to quaternary structure, homodimer.

It carries out the reaction D-glycero-beta-D-manno-heptose 7-phosphate + ATP = D-glycero-beta-D-manno-heptose 1,7-bisphosphate + ADP + H(+). It catalyses the reaction D-glycero-beta-D-manno-heptose 1-phosphate + ATP + H(+) = ADP-D-glycero-beta-D-manno-heptose + diphosphate. The protein operates within nucleotide-sugar biosynthesis; ADP-L-glycero-beta-D-manno-heptose biosynthesis; ADP-L-glycero-beta-D-manno-heptose from D-glycero-beta-D-manno-heptose 7-phosphate: step 1/4. Its pathway is nucleotide-sugar biosynthesis; ADP-L-glycero-beta-D-manno-heptose biosynthesis; ADP-L-glycero-beta-D-manno-heptose from D-glycero-beta-D-manno-heptose 7-phosphate: step 3/4. Functionally, catalyzes the phosphorylation of D-glycero-D-manno-heptose 7-phosphate at the C-1 position to selectively form D-glycero-beta-D-manno-heptose-1,7-bisphosphate. In terms of biological role, catalyzes the ADP transfer from ATP to D-glycero-beta-D-manno-heptose 1-phosphate, yielding ADP-D-glycero-beta-D-manno-heptose. The chain is Bifunctional protein HldE from Shewanella putrefaciens (strain CN-32 / ATCC BAA-453).